Reading from the N-terminus, the 622-residue chain is Palmitoyl-protein thioesterase-dolichyl pyrophosphate phosphatase fusion 1 (622 aa).

The signal sequence occupies residues 1 to 24 (MLSCSSFLIFFLFSWVLLPMKSFA). Over 25-405 (IPIISLDKVR…NVSEEKGPKS (381 aa)) the chain is Lumenal. A disulfide bond links cysteine 106 and cysteine 138. Residue serine 125 is part of the active site. The N-linked (GlcNAc...) asparagine glycan is linked to asparagine 223. Aspartate 245 is an active-site residue. An N-linked (GlcNAc...) asparagine glycan is attached at asparagine 260. Histidine 298 is an active-site residue. Residue asparagine 396 is glycosylated (N-linked (GlcNAc...) asparagine). The helical transmembrane segment at 406–426 (FANLAFITIFSHFFYHIDDMW) threads the bilayer. Over 427 to 428 (RS) the chain is Cytoplasmic. Residues 429-449 (TLGLFSLIPQIIGIIYLTVMF) traverse the membrane as a helical segment. Topologically, residues 450 to 488 (TGRELDTFMQFGGQVVNEFINYVVKVSLKYPRPADIEYG) are lumenal. A helical transmembrane segment spans residues 489 to 511 (VGYGMPSSHSQFMGFFSAYMIAW). The Cytoplasmic segment spans residues 512 to 519 (DYKYRRSQ). Residues 520–540 (CFSMLSFAKYAIYLTLSTFVC) form a helical membrane-spanning segment. At 541–552 (SSRYLLDFHYLT) the chain is on the lumenal side. Residues 553–573 (QVVYGYMIGFGVGLFWVYLVG) form a helical membrane-spanning segment. The Cytoplasmic portion of the chain corresponds to 574 to 622 (KLRSLGVTKWLLSLPPLQFFYIKDTIPHSKDNHKRQWLESKQFKNQKSN).

In the N-terminal section; belongs to the palmitoyl-protein thioesterase family. This sequence in the C-terminal section; belongs to the dolichyldiphosphatase family. Post-translationally, proteolytically cleaved, possibly by krp1.

It is found in the vacuole. Its subcellular location is the endoplasmic reticulum membrane. The enzyme catalyses S-hexadecanoyl-L-cysteinyl-[protein] + H2O = L-cysteinyl-[protein] + hexadecanoate + H(+). The catalysed reaction is a di-trans,poly-cis-dolichyl diphosphate + H2O = a di-trans,poly-cis-dolichyl phosphate + phosphate + H(+). Its function is as follows. Essential protein. Removes thioester-linked fatty acyl groups such as palmitate from modified cysteine residues in proteins or peptides during vacuolar degradation. Required for efficient N-glycosylation. Necessary for maintaining optimal levels of dolichol-linked oligosaccharides. In Schizosaccharomyces pombe (strain 972 / ATCC 24843) (Fission yeast), this protein is Palmitoyl-protein thioesterase-dolichyl pyrophosphate phosphatase fusion 1 (pdf1).